We begin with the raw amino-acid sequence, 183 residues long: Calcium-binding protein M (183 aa).

G2 carries N-myristoyl glycine lipidation. 4 consecutive EF-hand domains span residues 25-60 (EEVA…KLPN), 61-96 (YPED…IGKG), 97-132 (SAED…MKNV), and 142-177 (DIEL…SPSL). Residues D74, D76, S78, T80, E85, D110, D112, S114, E121, D155, D157, N159, and E166 each coordinate Ca(2+).

Belongs to the recoverin family.

This Dictyostelium discoideum (Social amoeba) protein is Calcium-binding protein M (cbpM).